We begin with the raw amino-acid sequence, 151 residues long: UPF0208 membrane protein plu3094 (151 aa).

Helical transmembrane passes span 46-65 (FGIRFMPPLAIFTLTWQIAL) and 69-91 (LGPAVATALFACSLPMQGLWWLG).

The protein belongs to the UPF0208 family.

The protein localises to the cell inner membrane. This Photorhabdus laumondii subsp. laumondii (strain DSM 15139 / CIP 105565 / TT01) (Photorhabdus luminescens subsp. laumondii) protein is UPF0208 membrane protein plu3094.